A 507-amino-acid polypeptide reads, in one-letter code: ATP synthase subunit alpha (507 aa).

168-175 (GDRQTGKT) provides a ligand contact to ATP.

The protein belongs to the ATPase alpha/beta chains family. F-type ATPases have 2 components, CF(1) - the catalytic core - and CF(0) - the membrane proton channel. CF(1) has five subunits: alpha(3), beta(3), gamma(1), delta(1), epsilon(1). CF(0) has three main subunits: a(1), b(2) and c(9-12). The alpha and beta chains form an alternating ring which encloses part of the gamma chain. CF(1) is attached to CF(0) by a central stalk formed by the gamma and epsilon chains, while a peripheral stalk is formed by the delta and b chains.

The protein resides in the cell membrane. It catalyses the reaction ATP + H2O + 4 H(+)(in) = ADP + phosphate + 5 H(+)(out). In terms of biological role, produces ATP from ADP in the presence of a proton gradient across the membrane. The alpha chain is a regulatory subunit. The chain is ATP synthase subunit alpha from Mesomycoplasma hyopneumoniae (strain 7448) (Mycoplasma hyopneumoniae).